Consider the following 452-residue polypeptide: Phosphatidylinositol N-acetylglucosaminyltransferase GPI3 subunit (452 aa).

Residues 407 to 427 (LYLLCGIVEYMLFFLLEWLYP) form a helical membrane-spanning segment.

The protein belongs to the glycosyltransferase group 1 family. As to quaternary structure, component of the phosphatidylinositol N-acetylglucosaminyltransferase complex composed of at least GPI1, GPI2, GPI3, GPI15, GPI19 and ERI1.

The protein localises to the endoplasmic reticulum membrane. The enzyme catalyses a 1,2-diacyl-sn-glycero-3-phospho-(1D-myo-inositol) + UDP-N-acetyl-alpha-D-glucosamine = a 6-(N-acetyl-alpha-D-glucosaminyl)-1-(1,2-diacyl-sn-glycero-3-phospho)-1D-myo-inositol + UDP + H(+). It participates in glycolipid biosynthesis; glycosylphosphatidylinositol-anchor biosynthesis. With respect to regulation, inhibited by Ras, probably via the interaction between RAS2 and ERI1. Its function is as follows. Catalytic subunit in the complex catalyzing the transfer of N-acetylglucosamine from UDP-N-acetylglucosamine to phosphatidylinositol, the first step of GPI biosynthesis. This chain is Phosphatidylinositol N-acetylglucosaminyltransferase GPI3 subunit (SPT14), found in Saccharomyces cerevisiae (strain RM11-1a) (Baker's yeast).